The primary structure comprises 288 residues: Bifunctional protein FolD (288 aa).

NADP(+) is bound by residues 168 to 170 (GRG), T195, and V236.

This sequence belongs to the tetrahydrofolate dehydrogenase/cyclohydrolase family. As to quaternary structure, homodimer.

The catalysed reaction is (6R)-5,10-methylene-5,6,7,8-tetrahydrofolate + NADP(+) = (6R)-5,10-methenyltetrahydrofolate + NADPH. The enzyme catalyses (6R)-5,10-methenyltetrahydrofolate + H2O = (6R)-10-formyltetrahydrofolate + H(+). It participates in one-carbon metabolism; tetrahydrofolate interconversion. Catalyzes the oxidation of 5,10-methylenetetrahydrofolate to 5,10-methenyltetrahydrofolate and then the hydrolysis of 5,10-methenyltetrahydrofolate to 10-formyltetrahydrofolate. The polypeptide is Bifunctional protein FolD (Mycobacterium sp. (strain JLS)).